The chain runs to 164 residues: Phosphopantetheine adenylyltransferase (164 aa).

Serine 9 contacts substrate. Residues 9-10 and histidine 17 contribute to the ATP site; that span reads SF. Positions 41, 73, and 87 each coordinate substrate. Residues 88-90, glutamate 98, and 122-128 each bind ATP; these read GLR and YSYLSSS.

Belongs to the bacterial CoaD family. In terms of assembly, homohexamer. The cofactor is Mg(2+).

The protein resides in the cytoplasm. The enzyme catalyses (R)-4'-phosphopantetheine + ATP + H(+) = 3'-dephospho-CoA + diphosphate. The protein operates within cofactor biosynthesis; coenzyme A biosynthesis; CoA from (R)-pantothenate: step 4/5. Reversibly transfers an adenylyl group from ATP to 4'-phosphopantetheine, yielding dephospho-CoA (dPCoA) and pyrophosphate. In Rhodococcus opacus (strain B4), this protein is Phosphopantetheine adenylyltransferase.